The chain runs to 200 residues: Large ribosomal subunit protein uL22c (200 aa).

The protein belongs to the universal ribosomal protein uL22 family. In terms of assembly, part of the 50S ribosomal subunit.

It is found in the plastid. Its subcellular location is the chloroplast. Functionally, this protein binds specifically to 23S rRNA. In terms of biological role, the globular domain of the protein is located near the polypeptide exit tunnel on the outside of the subunit, while an extended beta-hairpin is found that lines the wall of the exit tunnel in the center of the 70S ribosome. In Medicago sativa (Alfalfa), this protein is Large ribosomal subunit protein uL22c (rpl22).